The chain runs to 242 residues: ATP synthase subunit a (242 aa).

A run of 6 helical transmembrane segments spans residues 29 to 49 (SSIYMLLATTLSLTYLYLAFY), 84 to 104 (FIPLVFSLFIFILFCNLLGMT), 114 to 134 (IIVTFTLALLIFLTVTIVGFI), 140 to 160 (FLTLFLPHGTPVWLAPLMIVI), 189 to 209 (VIASFTVSLMIYLKFLPIPLM), and 210 to 230 (VILIGFEIFIAILQAYIFTIL).

The protein belongs to the ATPase A chain family. In terms of assembly, F-type ATPases have 2 components, CF(1) - the catalytic core - and CF(0) - the membrane proton channel. CF(1) has five subunits: alpha(3), beta(3), gamma(1), delta(1), epsilon(1). CF(0) has three main subunits: a(1), b(2) and c(9-12). The alpha and beta chains form an alternating ring which encloses part of the gamma chain. CF(1) is attached to CF(0) by a central stalk formed by the gamma and epsilon chains, while a peripheral stalk is formed by the delta and b chains.

It is found in the cell inner membrane. Functionally, key component of the proton channel; it plays a direct role in the translocation of protons across the membrane. The chain is ATP synthase subunit a from Rickettsia prowazekii (strain Madrid E).